Reading from the N-terminus, the 2194-residue chain is Supervillin (2194 aa).

Residues 1 to 174 (MKRKERIARR…SSYSRTELSG (174 aa)) form an interaction with MYLK region. 8 disordered regions span residues 35–98 (LEED…TQSL), 118–335 (EKYG…QRRH), 388–414 (PESISEGSWVGPAPQTVTKPPPSKVLE), 450–500 (EDRG…TERM), 513–563 (AVSQ…QTSK), 589–667 (RASR…KVDE), 685–719 (KSFDEKSVPKRRSRNAAVEQRLRRLQDRSHTQPVT), and 739–791 (HPVM…DSST). Ser-50 bears the Phosphoserine mark. Residues 87-98 (PYSSGIMDTQSL) are compositionally biased toward polar residues. Composition is skewed to basic and acidic residues over residues 139-161 (SRKDPEAAEKRGVRSERSAESSR) and 181-192 (ESKDYGLHRSDG). Phosphoserine occurs at positions 245 and 262. Composition is skewed to basic and acidic residues over residues 283 to 294 (PKHEWFLQKDSE) and 308 to 319 (KVREKLVREESA). Polar residues predominate over residues 320–330 (RSSPELTSESL). 2 positions are modified to phosphoserine: Ser-321 and Ser-322. A compositionally biased stretch (polar residues) spans 455 to 467 (GRSQEAPSGTEDL). Positions 540–551 (PPQLQALKAKAP) are enriched in low complexity. Basic and acidic residues-rich tracts occupy residues 592 to 615 (RKPELHSRVEGSSEGPGVERERGS) and 626 to 635 (ENRKTSERFR). Phosphoserine occurs at positions 652 and 686. Over residues 704-714 (QRLRRLQDRSH) the composition is skewed to basic and acidic residues. 2 positions are modified to phosphoserine: Ser-747 and Ser-781. A compositionally biased stretch (basic and acidic residues) spans 770 to 782 (LARDQTNESKDSA). Tyr-829 bears the Phosphotyrosine mark. Position 831 is a phosphothreonine (Thr-831). A phosphoserine mark is found at Ser-893, Ser-899, Ser-903, Ser-947, Ser-979, and Ser-1031. The tract at residues 1036-1077 (EFGEPTSEQTGAAAGKPAAPTATPVSWKPQDPSEQPQEKRYQ) is disordered. A compositionally biased stretch (low complexity) spans 1045 to 1059 (TGAAAGKPAAPTATP). Residues Ser-1099 and Ser-1205 each carry the phosphoserine modification. Thr-1210 is modified (phosphothreonine). A phosphoserine mark is found at Ser-1214, Ser-1302, and Ser-1385. The interaction with NEB stretch occupies residues 1399–1667 (SNVSLRSVNL…KFLDWTELKR (269 aa)). Gelsolin-like repeat units follow at residues 1421–1520 (KKLM…LGGQ), 1540–1662 (IETN…FLDW), 1732–1842 (ISVD…FQGG), 1861–1962 (WRLY…LGRR), and 1995–2102 (ATEF…FPSW). The 64-residue stretch at 2131-2194 (KLCKTIYPLA…VNLKKAKGLF (64 aa)) folds into the HP domain.

The protein belongs to the villin/gelsolin family. In terms of assembly, associates with F-actin. Interacts with NEB. Interacts with MYH9. Interacts with MYLK. Interacts with TASOR. Interacts with TRIP6 and DYNLT1. Interacts with KIF14; at midbody during cytokinesis.

It is found in the cell membrane. The protein resides in the cytoplasm. Its subcellular location is the cytoskeleton. The protein localises to the cell projection. It localises to the invadopodium. It is found in the podosome. The protein resides in the midbody. Its subcellular location is the cleavage furrow. Forms a high-affinity link between the actin cytoskeleton and the membrane. Is among the first costameric proteins to assemble during myogenesis and it contributes to myogenic membrane structure and differentiation. Appears to be involved in myosin II assembly. May modulate myosin II regulation through MLCK during cell spreading, an initial step in cell migration. May play a role in invadopodial function. Its function is as follows. May be involved in modulation of focal adhesions. Supervillin-mediated down-regulation of focal adhesions involves binding to TRIP6. Plays a role in cytokinesis through KIF14 interaction. This chain is Supervillin, found in Bos taurus (Bovine).